The primary structure comprises 100 residues: Integration host factor subunit alpha (100 aa).

Belongs to the bacterial histone-like protein family. As to quaternary structure, heterodimer of an alpha and a beta chain.

This protein is one of the two subunits of integration host factor, a specific DNA-binding protein that functions in genetic recombination as well as in transcriptional and translational control. In Zymomonas mobilis subsp. mobilis (strain ATCC 31821 / ZM4 / CP4), this protein is Integration host factor subunit alpha (ihfA).